The primary structure comprises 288 residues: 4-hydroxy-tetrahydrodipicolinate synthase (288 aa).

Thr42 lines the pyruvate pocket. Residue Tyr129 is the Proton donor/acceptor of the active site. The active-site Schiff-base intermediate with substrate is Lys158. Ile200 provides a ligand contact to pyruvate.

This sequence belongs to the DapA family. Homotetramer; dimer of dimers.

The protein localises to the cytoplasm. The catalysed reaction is L-aspartate 4-semialdehyde + pyruvate = (2S,4S)-4-hydroxy-2,3,4,5-tetrahydrodipicolinate + H2O + H(+). It participates in amino-acid biosynthesis; L-lysine biosynthesis via DAP pathway; (S)-tetrahydrodipicolinate from L-aspartate: step 3/4. Catalyzes the condensation of (S)-aspartate-beta-semialdehyde [(S)-ASA] and pyruvate to 4-hydroxy-tetrahydrodipicolinate (HTPA). The protein is 4-hydroxy-tetrahydrodipicolinate synthase of Thermosipho melanesiensis (strain DSM 12029 / CIP 104789 / BI429).